The following is a 95-amino-acid chain: Alpha-bungarotoxin, isoform A31 (95 aa).

Positions 1–21 (MKTLLLTLVVVTIVCLDLGYT) are cleaved as a signal peptide. Cystine bridges form between Cys-24–Cys-44, Cys-37–Cys-65, Cys-50–Cys-54, Cys-69–Cys-80, and Cys-81–Cys-86.

Belongs to the three-finger toxin family. Long-chain subfamily. Type II alpha-neurotoxin sub-subfamily. As to quaternary structure, monomer in solution, homodimer in crystal state. Expressed by the venom gland.

The protein localises to the secreted. Its function is as follows. Binds with high affinity to muscular (tested on Torpedo marmorata, Kd=0.4 nM) and neuronal (tested on chimeric alpha-7/CHRNA7, Kd=0.95 nM) nicotinic acetylcholine receptor (nAChR) and inhibits acetylcholine from binding to the receptor, thereby impairing neuromuscular and neuronal transmission. It also shows an activity on GABA(A) receptors. It antagonises GABA-activated currents with high potency when tested on primary hippocampal neurons. It inhibits recombinantly expressed GABA(A) receptors composed of alpha-2-beta-2-gamma-2 (GABRA2-GABRB2-GABRG2) subunits with high potency (62.3% inhibition at 20 uM of toxin). It also shows a weaker inhibition on GABA(A) receptors composed of alpha-1-beta-2-gamma-2 (GABRA1-GABRB2-GABRG2) subunits, alpha-4-beta-2-gamma-2 (GABRA4-GABRB2-GABRG2) subunits, and alpha-5-beta-2-gamma-2 (GABRA5-GABRB2-GABRG2) subunits. A very weak inhibition is also observed on GABA(A) receptor composed of alpha-1-beta-3-gamma-2 (GABRA1-GABRB3-GABRG2). It has also been shown to bind and inhibit recombinant GABA(A) receptor beta-3/GABRB3 subunit (Kd=about 50 nM). In addition, it blocks the extracellular increase of dopamine evoked by nicotine only at the higher dose (4.2 uM). In vivo, when intraperitoneally injected into mice, induces flaccid paralysis of the limbs and respiratory distress, and causes death in a dose-dependent manner. The protein is Alpha-bungarotoxin, isoform A31 of Bungarus candidus (Malayan krait).